A 437-amino-acid polypeptide reads, in one-letter code: Trigger factor (437 aa).

The PPIase FKBP-type domain occupies 174 to 260 (GDFVQISFEG…VKSLKKKIFP (87 aa)).

The protein belongs to the FKBP-type PPIase family. Tig subfamily.

The protein resides in the cytoplasm. The catalysed reaction is [protein]-peptidylproline (omega=180) = [protein]-peptidylproline (omega=0). Involved in protein export. Acts as a chaperone by maintaining the newly synthesized protein in an open conformation. Functions as a peptidyl-prolyl cis-trans isomerase. The polypeptide is Trigger factor (Koribacter versatilis (strain Ellin345)).